Consider the following 404-residue polypeptide: Bifunctional enzyme IspD/IspF (404 aa).

The tract at residues 1-243 (MQAEEQFSCG…KLTRMAIPDV (243 aa)) is 2-C-methyl-D-erythritol 4-phosphate cytidylyltransferase. Residues 244–404 (RTGNGYDVHQ…TVVYASGGDA (161 aa)) form a 2-C-methyl-D-erythritol 2,4-cyclodiphosphate synthase region. Aspartate 250 and histidine 252 together coordinate a divalent metal cation. Residues 250–252 (DVH) and 276–277 (HS) contribute to the 4-CDP-2-C-methyl-D-erythritol 2-phosphate site. A divalent metal cation is bound at residue histidine 284. Residues 298–300 (DIG), 374–377 (TTNE), phenylalanine 381, and arginine 384 each bind 4-CDP-2-C-methyl-D-erythritol 2-phosphate.

It in the N-terminal section; belongs to the IspD/TarI cytidylyltransferase family. IspD subfamily. The protein in the C-terminal section; belongs to the IspF family. It depends on a divalent metal cation as a cofactor.

It carries out the reaction 2-C-methyl-D-erythritol 4-phosphate + CTP + H(+) = 4-CDP-2-C-methyl-D-erythritol + diphosphate. The enzyme catalyses 4-CDP-2-C-methyl-D-erythritol 2-phosphate = 2-C-methyl-D-erythritol 2,4-cyclic diphosphate + CMP. It functions in the pathway isoprenoid biosynthesis; isopentenyl diphosphate biosynthesis via DXP pathway; isopentenyl diphosphate from 1-deoxy-D-xylulose 5-phosphate: step 2/6. It participates in isoprenoid biosynthesis; isopentenyl diphosphate biosynthesis via DXP pathway; isopentenyl diphosphate from 1-deoxy-D-xylulose 5-phosphate: step 4/6. Bifunctional enzyme that catalyzes the formation of 4-diphosphocytidyl-2-C-methyl-D-erythritol from CTP and 2-C-methyl-D-erythritol 4-phosphate (MEP) (IspD), and catalyzes the conversion of 4-diphosphocytidyl-2-C-methyl-D-erythritol 2-phosphate (CDP-ME2P) to 2-C-methyl-D-erythritol 2,4-cyclodiphosphate (ME-CPP) with a corresponding release of cytidine 5-monophosphate (CMP) (IspF). The sequence is that of Bifunctional enzyme IspD/IspF from Sinorhizobium medicae (strain WSM419) (Ensifer medicae).